The following is a 449-amino-acid chain: uncharacterized protein (449 aa).

The protein localises to the mitochondrion. This is an uncharacterized protein from Podospora anserina (strain S / ATCC MYA-4624 / DSM 980 / FGSC 10383) (Pleurage anserina).